Reading from the N-terminus, the 388-residue chain is GTPase Obg (388 aa).

Positions 4-162 constitute an Obg domain; sequence SNFVDYVKIY…MTVIMELKLL (159 aa). The OBG-type G domain maps to 163–329; that stretch reads ADVGLVGFPN…LKDILWEELN (167 aa). Residues 169 to 176, 194 to 198, 216 to 219, 283 to 286, and 310 to 312 each bind GTP; these read GFPNAGKS, FTTLE, DIPG, TKSD, and SSV. Mg(2+) is bound by residues Ser176 and Thr196. The tract at residues 352-388 is disordered; the sequence is LKDMGEDEELDYEYEEDADDEDDDLDYEYEEEDWEEK. The segment covering 356 to 388 has biased composition (acidic residues); it reads GEDEELDYEYEEDADDEDDDLDYEYEEEDWEEK.

This sequence belongs to the TRAFAC class OBG-HflX-like GTPase superfamily. OBG GTPase family. In terms of assembly, monomer. It depends on Mg(2+) as a cofactor.

Its subcellular location is the cytoplasm. Its function is as follows. An essential GTPase which binds GTP, GDP and possibly (p)ppGpp with moderate affinity, with high nucleotide exchange rates and a fairly low GTP hydrolysis rate. Plays a role in control of the cell cycle, stress response, ribosome biogenesis and in those bacteria that undergo differentiation, in morphogenesis control. This is GTPase Obg from Bacteroides thetaiotaomicron (strain ATCC 29148 / DSM 2079 / JCM 5827 / CCUG 10774 / NCTC 10582 / VPI-5482 / E50).